Consider the following 442-residue polypeptide: Terpene cyclase aneC (442 aa).

Mg(2+) contacts are provided by Asp196, Asn327, Ser331, and Glu335. Residues Arg419 and Tyr420 each contribute to the (2E,6E)-farnesyl diphosphate site.

The protein belongs to the terpene synthase family. In terms of assembly, homodimer. The cofactor is Mg(2+).

The catalysed reaction is (2E,6E)-farnesyl diphosphate = dauca-4,7-diene + diphosphate. It functions in the pathway secondary metabolite biosynthesis. In terms of biological role, terpene cyclase; part of the gene cluster that mediates the biosynthesis of aculenes, a unique type of norsesquiterpenes that contain a nordaucane skeleton linked to an L-proline moiety and are of mixed biosynthetic origin. The pathway begins with the synthesis of dauca-4,7-diene by the terpene cyclase aneC using farnesyl pyrophosphate (FPP) as substrate. The cytochrome P450 monooxygenase aneF then performs the initial oxidation at C-12 of dauca-4,7-diene to yield asperaculane D. Asperaculane D is substrate of the cytochrome P450 monooxygenase aneD for C-10 hydroxylation to yield asperaculane E. The cytochrome P450 monooxygenase aneG then converts asperaculane E into aculene D via C-2 oxidation. The monomodular nonribosomal peptide synthtase aneB adenylates L-proline and the thiohydrolase aneE transfers this activated L-proline derivative to aculenes D and C to produce respectively aculenes B and A. The dioxygenase aneA converts aculene D into aculene C, and aculene B into aculene A by introducing the 5,6-alkene moiety. Asperculanes A, B, C and F, as well as 14-prolyl asperculane C, might be shunt products of the pathway. In Aspergillus aculeatus (strain ATCC 16872 / CBS 172.66 / WB 5094), this protein is Terpene cyclase aneC.